Reading from the N-terminus, the 92-residue chain is Acyl carrier protein (92 aa).

Residues M1 to V84 form the Carrier domain. The residue at position 44 (S44) is an O-(pantetheine 4'-phosphoryl)serine.

Belongs to the acyl carrier protein (ACP) family. In terms of processing, 4'-phosphopantetheine is transferred from CoA to a specific serine of apo-ACP by AcpS. This modification is essential for activity because fatty acids are bound in thioester linkage to the sulfhydryl of the prosthetic group.

Its subcellular location is the cytoplasm. It functions in the pathway lipid metabolism; fatty acid biosynthesis. In terms of biological role, carrier of the growing fatty acid chain in fatty acid biosynthesis. The chain is Acyl carrier protein from Streptomyces coelicolor (strain ATCC BAA-471 / A3(2) / M145).